Here is a 293-residue protein sequence, read N- to C-terminus: Acetylglutamate kinase (293 aa).

Residues 70-71 (GG), arginine 92, and asparagine 186 contribute to the substrate site.

This sequence belongs to the acetylglutamate kinase family. ArgB subfamily.

It is found in the cytoplasm. It catalyses the reaction N-acetyl-L-glutamate + ATP = N-acetyl-L-glutamyl 5-phosphate + ADP. It participates in amino-acid biosynthesis; L-arginine biosynthesis; N(2)-acetyl-L-ornithine from L-glutamate: step 2/4. Its function is as follows. Catalyzes the ATP-dependent phosphorylation of N-acetyl-L-glutamate. This chain is Acetylglutamate kinase, found in Synechococcus sp. (strain CC9605).